Here is a 194-residue protein sequence, read N- to C-terminus: Amidophosphoribosyltransferase (194 aa).

A propeptide spanning residues Met1–Glu11 is cleaved from the precursor. Cys12 functions as the Nucleophile in the catalytic mechanism. The region spanning Cys12–Gly194 is the Glutamine amidotransferase type-2 domain.

The protein in the C-terminal section; belongs to the purine/pyrimidine phosphoribosyltransferase family.

The enzyme catalyses 5-phospho-beta-D-ribosylamine + L-glutamate + diphosphate = 5-phospho-alpha-D-ribose 1-diphosphate + L-glutamine + H2O. It participates in purine metabolism; IMP biosynthesis via de novo pathway; N(1)-(5-phospho-D-ribosyl)glycinamide from 5-phospho-alpha-D-ribose 1-diphosphate: step 1/2. In terms of biological role, catalyzes the formation of phosphoribosylamine from phosphoribosylpyrophosphate (PRPP) and glutamine. In Lacticaseibacillus casei (Lactobacillus casei), this protein is Amidophosphoribosyltransferase.